Reading from the N-terminus, the 608-residue chain is Probable adenylate kinase 5, chloroplastic (608 aa).

The segment covering 1–20 has biased composition (low complexity); the sequence is MAASSSSSSPAAASAPFAAP. A disordered region spans residues 1 to 44; that stretch reads MAASSSSSSPAAASAPFAAPGPHRRPGLALRPSPPTPPSSSLSC. The transit peptide at 1–75 directs the protein to the chloroplast; it reads MAASSSSSSP…GPRGMGLRCR (75 aa). 99–104 is a binding site for ATP; the sequence is ASGKGT. Positions 119 to 148 are NMP; sequence STGDLLRAEVSSGTEIGKKAKEYMDNGMLV. Residues Thr-120, Arg-125, 146–148, 175–178, and Gln-182 contribute to the AMP site; these read MLV and GYPR. ATP contacts are provided by residues Arg-209, Arg-213, and 222–223; that span reads IY. The tract at residues 212–245 is LID; sequence GRRLDPETGKIYHIKNFPPENDEVSARLVTRSDD. Residues Arg-242 and Arg-253 each coordinate AMP.

Belongs to the adenylate kinase family.

It localises to the plastid. The protein resides in the chloroplast. It carries out the reaction AMP + ATP = 2 ADP. Its function is as follows. Catalyzes the reversible transfer of the terminal phosphate group between ATP and AMP. Plays an important role in cellular energy homeostasis and in adenine nucleotide metabolism. The polypeptide is Probable adenylate kinase 5, chloroplastic (Oryza sativa subsp. japonica (Rice)).